A 306-amino-acid chain; its full sequence is Uricase (306 aa).

Residues K5 and T65 each act as charge relay system in the active site. Urate contacts are provided by T65, D66, F175, R192, I240, Q241, and N267. The disordered stretch occupies residues 281–306 (AKVLREPPRPTGYQQFSMDRSDLEEQ).

It belongs to the uricase family.

It carries out the reaction urate + O2 + H2O = 5-hydroxyisourate + H2O2. The protein operates within purine metabolism; urate degradation; (S)-allantoin from urate: step 1/3. Functionally, catalyzes the oxidation of uric acid to 5-hydroxyisourate, which is further processed to form (S)-allantoin. This is Uricase from Halalkalicoccus jeotgali (strain DSM 18796 / CECT 7217 / JCM 14584 / KCTC 4019 / B3).